We begin with the raw amino-acid sequence, 126 residues long: Protein ApaG (126 aa).

The ApaG domain occupies Asp-2–Asn-126.

The polypeptide is Protein ApaG (Vibrio cholerae serotype O1 (strain ATCC 39541 / Classical Ogawa 395 / O395)).